The following is a 431-amino-acid chain: Glutamyl-tRNA(Gln) amidotransferase subunit A (431 aa).

Catalysis depends on charge relay system residues K55 and S130. S154 (acyl-ester intermediate) is an active-site residue.

The protein belongs to the amidase family. GatA subfamily. Heterotrimer of A, B and C subunits.

The enzyme catalyses L-glutamyl-tRNA(Gln) + L-glutamine + ATP + H2O = L-glutaminyl-tRNA(Gln) + L-glutamate + ADP + phosphate + H(+). Functionally, allows the formation of correctly charged Gln-tRNA(Gln) through the transamidation of misacylated Glu-tRNA(Gln) in organisms which lack glutaminyl-tRNA synthetase. The reaction takes place in the presence of glutamine and ATP through an activated gamma-phospho-Glu-tRNA(Gln). This Methanococcus vannielii (strain ATCC 35089 / DSM 1224 / JCM 13029 / OCM 148 / SB) protein is Glutamyl-tRNA(Gln) amidotransferase subunit A.